The primary structure comprises 75 residues: Small ribosomal subunit protein bS18 (75 aa).

This sequence belongs to the bacterial ribosomal protein bS18 family. In terms of assembly, part of the 30S ribosomal subunit. Forms a tight heterodimer with protein bS6.

Binds as a heterodimer with protein bS6 to the central domain of the 16S rRNA, where it helps stabilize the platform of the 30S subunit. The protein is Small ribosomal subunit protein bS18 of Buchnera aphidicola subsp. Acyrthosiphon pisum (strain 5A).